The primary structure comprises 165 residues: Protein SprT (165 aa).

Residues 10–157 (EACYRQAEDF…YCRRCKATLV (148 aa)) form the SprT-like domain. His-69 lines the Zn(2+) pocket. The active site involves Glu-70. His-73 is a Zn(2+) binding site.

The protein belongs to the SprT family. It depends on Zn(2+) as a cofactor.

The protein resides in the cytoplasm. The protein is Protein SprT of Pseudomonas paraeruginosa (strain DSM 24068 / PA7) (Pseudomonas aeruginosa (strain PA7)).